The following is a 733-amino-acid chain: MAQFTGRVVGDYLVGRQIGSGSFSVVWEARHRVDGTEVAIKEIAMDRLNKKLQESLMSEIFILRRINHPNIIRLIDMIKSPGKVHLVLEYCKGGDLSVYVQRHGIVPEATAKHFMQQLAAGLQVLRDNNIIHRDLKPQNLLLSTNENDADLKIADFGFARSLQPRGLAETLCGSPLYMAPEIMQLQKYDAKADLWSVGAILFQLVTGRTPFTGNSQIQLLQNIIRSTELHFPGDCRDLSLDCIDLCQKLLRRNPVERLTFEEFFNHPFLSDRQSYDFSRSRLGLRTMDGFLSSGSSPSRNMEESSQEDCLPFLLDDDSSGPEGSPSYLKKTSSMKSSSGIKVDTRIERKEVESSPLKHTELTSGYSSFNQKVENDRFRFETQINSDRRNRREPTGLTDSRSLIAPGRVDDSQDSMDQDFVLVSGPPVDMPSSSSSSSKPYNFPFKSQSPPVELFNRSISSTAPMPIIGATSNSIGQFGSLDSQYSAPSTSHGSLDLGDAFEQPSTHSLTRIRSLRKYAATIAELVYERIESDKHLEAFSIQLAILAIWKQALHICHTQAISGLEGSPSQDINKLRSSSLKHDTHSSNKVTDLSHDGSEEISSQIQRQFIQEIELAEELAKSIEPGNTKMPDAMETIFEAALDLGKLGGVKEVMGDTENAGNQYSKAVRLLVFLLVEAPMLILNPPLSLTNSVRYRLRTYIDFLSRRLKHLQSHRRSSAGQMQGSSLAMMNRQS.

In terms of domain architecture, Protein kinase spans 12 to 269 (YLVGRQIGSG…FEEFFNHPFL (258 aa)). ATP is bound by residues 18-26 (IGSGSFSVV) and K41. Catalysis depends on D134, which acts as the Proton acceptor. 2 disordered regions span residues 292–363 (SSGS…ELTS) and 379–414 (FETQINSDRRNRREPTGLTDSRSLIAPGRVDDSQDS). Positions 329–339 (KKTSSMKSSSG) are enriched in polar residues. Basic and acidic residues-rich tracts occupy residues 342 to 360 (VDTRIERKEVESSPLKHTE) and 379 to 393 (FETQINSDRRNRREP). Residues 419–422 (FVLV) carry the AIM (Atg8-family-interacting motif) motif. Disordered stretches follow at residues 565 to 596 (GSPSQDINKLRSSSLKHDTHSSNKVTDLSHDG) and 713 to 733 (HRRSSAGQMQGSSLAMMNRQS). The segment covering 566–577 (SPSQDINKLRSS) has biased composition (polar residues). Residues 579–596 (LKHDTHSSNKVTDLSHDG) are compositionally biased toward basic and acidic residues. Residues 717–733 (SAGQMQGSSLAMMNRQS) show a composition bias toward polar residues.

It belongs to the protein kinase superfamily. Ser/Thr protein kinase family.

The protein resides in the cytoplasmic vesicle. It localises to the autophagosome. Serine/threonine protein kinase involved in autophagy. The ATG1-ATG13 protein kinase complex regulates downstream events required for autophagosome enclosure and/or vacuolar delivery. The polypeptide is Serine/threonine-protein kinase ATG1c (Arabidopsis thaliana (Mouse-ear cress)).